Here is a 572-residue protein sequence, read N- to C-terminus: Phenylalanine--tRNA ligase beta subunit (572 aa).

A B5 domain is found at 285 to 363 (LSTTTKTVSH…RAFGFNELEP (79 aa)). Positions 341, 347, 350, and 351 each coordinate Mg(2+).

This sequence belongs to the phenylalanyl-tRNA synthetase beta subunit family. Type 2 subfamily. As to quaternary structure, tetramer of two alpha and two beta subunits. The cofactor is Mg(2+).

Its subcellular location is the cytoplasm. It catalyses the reaction tRNA(Phe) + L-phenylalanine + ATP = L-phenylalanyl-tRNA(Phe) + AMP + diphosphate + H(+). The sequence is that of Phenylalanine--tRNA ligase beta subunit from Natronomonas pharaonis (strain ATCC 35678 / DSM 2160 / CIP 103997 / JCM 8858 / NBRC 14720 / NCIMB 2260 / Gabara) (Halobacterium pharaonis).